Consider the following 262-residue polypeptide: Acyl-coenzyme A diphosphatase FITM2 (262 aa).

At 1-23 (MEHLERCAWFLRGTLVRATVRRH) the chain is on the cytoplasmic side. A helical transmembrane segment spans residues 24–44 (LPWALVAAMLAGSVVKELSPL). The Lumenal segment spans residues 45–57 (PESYLSNKRNVLN). Residues 58–78 (VYFVKLAWAWTVCLLLPFIAL) traverse the membrane as a helical segment. At 79 to 93 (TNYHLTGKTSLVLRR) the chain is on the cytoplasmic side. A helical membrane pass occupies residues 94–114 (LSTLLVGTAIWYICTALFSNI). The Lumenal segment spans residues 115 to 145 (EHYTGSCYQSPALEGIRQEHRSKQQCHREGG). A helical transmembrane segment spans residues 146–166 (FWHGFDISGHSFLLTFCALMI). Histidine 155 is an active-site residue. Residues 167 to 190 (VEEMAVLHEVKTDRGHHLHAAITT) lie on the Cytoplasmic side of the membrane. The helical transmembrane segment at 191–211 (LVVALGFLTFIWVWMFLCTAV) threads the bilayer. Residues 212-218 (YFHDLTQ) lie on the Lumenal side of the membrane. The active site involves histidine 214. A helical membrane pass occupies residues 219–239 (KVFGTMFGLLGWYGTYGYWYL). At 240 to 262 (KSFSPGLPPQSCSLTLKRDTYKK) the chain is on the cytoplasmic side.

The protein belongs to the FIT family. Widely expressed, with highest levels in white and brown adipose tissues (at protein level). In the heart, mRNA expression levels do not correlate well with protein levels, suggesting post-transcriptional regulation in this organ.

The protein resides in the endoplasmic reticulum membrane. The catalysed reaction is an acyl-CoA + H2O = an acyl-4'-phosphopantetheine + adenosine 3',5'-bisphosphate + 2 H(+). It catalyses the reaction (9Z)-octadecenoyl-CoA + H2O = S-(9Z-octadecenoyl)-4'-phosphopantetheine + adenosine 3',5'-bisphosphate + 2 H(+). The enzyme catalyses (5Z,8Z,11Z,14Z)-eicosatetraenoyl-CoA + H2O = S-(5Z,8Z,11Z,14Z-eicosatetraenoyl)-4'-phosphopantetheine + adenosine 3',5'-bisphosphate + 2 H(+). It carries out the reaction hexadecanoyl-CoA + H2O = S-hexadecanoyl-4'-phosphopantetheine + adenosine 3',5'-bisphosphate + 2 H(+). Fatty acyl-coenzyme A (CoA) diphosphatase that hydrolyzes fatty acyl-CoA to yield acyl-4'-phosphopantetheine and adenosine 3',5'-bisphosphate. Preferentially hydrolyzes unsaturated long-chain acyl-CoA substrates such as oleoyl-CoA/(9Z)-octadecenoyl-CoA and arachidonoyl-CoA/(5Z,8Z,11Z,14Z)-eicosatetraenoyl-CoA in the endoplasmic reticulum (ER) lumen. This catalytic activity is required for maintaining ER structure and for lipid droplets (LDs) biogenesis, which are lipid storage organelles involved in maintaining lipid and energy homeostasis. Directly binds to diacylglycerol (DAGs) and triacylglycerol, which is also important for LD biogenesis. May support directional budding of nacent LDs from the ER into the cytosol by reducing DAG levels at sites of LD formation. Plays a role in the regulation of cell morphology and cytoskeletal organization. This chain is Acyl-coenzyme A diphosphatase FITM2, found in Mus musculus (Mouse).